The chain runs to 871 residues: MMQFQRDLEASLEAVSANAQELLKSLKSRKDVQDLNASLPKDPLDNCDAQTQAARAQLAEAATRILQLSIRPQEYLEHLQNGYQHLTCFRWLVELNILDHLPHSGTISYTDLARKASVPPMQLRSICRMAICNGFLEEPEANQVRHSRISALFARDESYLGWARWMVNYSVPAAYKLSDATRSWGETVAKDQTAFNLGMDVKVPFFDHLRQTPAMKDAFAAYMRNVTSNATWGLQHAVTGFDWASLPRGAKVVDVGGSLGHGSIAIAKEHTHLTFVIQDLPETVAGARKEMAQNDKIEASVKSRITFQEHDFFGPQTVKDADVYFLRMICHDWPDNEAKVILSQIRAALKPGAQIVIMDTILPQPGTISVLQEQQLRIRDLTMMEVFNAKERELEDWSSLMQSAGLEISRVNQPLNSVMGLLTVRSAGQTALSGTNTLTPELVAAVSASTGSADSRPVLIAGAGIAGLCLAQALKKAGIDFRVFERDSHIDARPQGYRLKFEADAAQSLKNILPDDVYEAFELSNAVTAVGETDFNPFNGNIIHSRTGGGLSGKKGLYATFTVDRKAFRTQLMTGIEDKISFGKEIAYYKTDDATSTVNAEFKDGTHVTGSFLAGTDGLHSVVRKTCVPNHRIVDTGAACIYGKTVMTPEFLARFPEKGLRFMTVVSDIAPMLQSCLIGDSPVTLLLEPIRFSEASRARYPELPPDYVYWALIGPKERFGSQEVTSMKNFVSLDQAAEQAAKLSLAVTEEWHPSLRALFELQDTKQASLIRVASTIPDIPSWESHSNVTVLGGSIHPMSPCGGVGANTAIVDADALAKVLVEHGTKPPVNAIAEFGAAMRTRAKRNIWRSEVGSKRMFGQKNLVDCSEFVF.

Positions 1–429 (MMQFQRDLEA…GLLTVRSAGQ (429 aa)) are O-methyltransferase. Asp-279 contacts S-adenosyl-L-methionine. His-331 acts as the Proton acceptor in catalysis. The FAD-dependent monooxygenase stretch occupies residues 430–871 (TALSGTNTLT…NLVDCSEFVF (442 aa)). FAD is bound by residues Glu-485, Arg-569, and Ala-806.

It in the C-terminal section; belongs to the paxM FAD-dependent monooxygenase family. In the N-terminal section; belongs to the class I-like SAM-binding methyltransferase superfamily. Cation-independent O-methyltransferase family. COMT subfamily.

It carries out the reaction nor-toralactone + S-adenosyl-L-methionine = toralactone + S-adenosyl-L-homocysteine + H(+). The catalysed reaction is toralactone + NADH + O2 + H(+) = 1-(3,4,5-trihydroxy-7-methoxynaphthalen-2-yl)propan-2-one + CO2 + NAD(+). It functions in the pathway mycotoxin biosynthesis. Dual O-methyltransferase/FAD-dependent monooxygenase; part of the gene cluster that mediates the biosynthesis of cercosporin, a light-activated, non-host-selective toxin. The perylenequinone chromophore of cercosporin absorbs light energy to attain an electronically-activated triplet state and produces active oxygen species such as the hydroxyl radical, superoxide, hydrogen peroxide or singlet oxygen upon reaction with oxygen molecules. These reactive oxygen species cause damage to various cellular components including lipids, proteins and nucleic acids. The first step of cercosporin biosynthesis is performed by the polyketide synthase CTB1 which catalyzes the formation of nor-toralactone. The starter unit acyltransferase (SAT) domain of CTB1 initiates polyketide extension by the selective utilization of acetyl-CoA, which is elongated to the heptaketide in the beta-ketoacyl synthase (KS) domain by successive condensations with six malonyl units introduced by the malonyl acyltransferase (MAT) domain. The product template (PT) domain catalyzes C4-C9 and C2-C11 aldol cyclizations and dehydrations to a trihydroxynaphthalene, which is thought to be delivered to the thioesterase (TE) domain for product release. The bifunctional enzyme CTB3 then methylates nor-toralactone to toralactone before conducting an unusual oxidative aromatic ring opening. The O-methyltransferase CTB2 further methylates the nascent OH-6 of the CBT3 product, blocking further oxidation at this site before the reductase CTB6 reduces the 2-oxopropyl ketone at position C7, giving naphthalene. The FAD-dependent monooxygenase CTB5 in concert with the multicopper oxidase CTB12 are responsible for homodimerization of naphthalene with CTB7 installing the dioxepine moiety, finally producing cercosporin. The fasciclin domain-containing protein CTB11 might act with CTB5 and CTB12 whereas the roles of CTB9 and CTB10 have still to be elucidated. This Cercospora nicotianae (Barn spot disease fungus) protein is Dual O-methyltransferase/FAD-dependent monooxygenase CTB3.